We begin with the raw amino-acid sequence, 490 residues long: Cardiolipin synthase A (490 aa).

The next 2 membrane-spanning stretches (helical) occupy residues 20-40 (LGLLLVGIQVLGFVAAIHAVL) and 49-69 (IAWATSLVFMPYLTLLPYLVF). PLD phosphodiesterase domains are found at residues 229-256 (VNFRNHRKVVVVDGECGFVGGHNVGVEY) and 403-430 (QPGFLHQKVVLVDRDTAAVGSANLDNRS). Residues histidine 234, lysine 236, aspartate 241, histidine 408, lysine 410, and aspartate 415 contribute to the active site.

Belongs to the phospholipase D family. Cardiolipin synthase subfamily. ClsA sub-subfamily.

The protein localises to the cell inner membrane. It carries out the reaction 2 a 1,2-diacyl-sn-glycero-3-phospho-(1'-sn-glycerol) = a cardiolipin + glycerol. In terms of biological role, catalyzes the reversible phosphatidyl group transfer from one phosphatidylglycerol molecule to another to form cardiolipin (CL) (diphosphatidylglycerol) and glycerol. The polypeptide is Cardiolipin synthase A (Pseudomonas aeruginosa (strain LESB58)).